Here is a 424-residue protein sequence, read N- to C-terminus: MIDIRLIREKPDFVKKALEKRNYEKKMVDDLLSLDAQFRELTNQINQLRAQRNSISKMVAQAKSSGKTEEIENLTEEGKKIGRQIDSIEDQLKEIKVQMEKLMLLVPNIPDDSVPEGKDETSNREIRKWGDPKKFDYNPQAHWDLGPSLGLMDFDRAAKLSGSRFTVMYGMFAKLERALTNFMLDMHTKEHGYTEVWLPHIVKRETMTITGQLPKFEEEAYRIEADDLFLIPTAEVPLVALRSNEILEEKDLPLLYTAYTPCYRREAGSYGKDVRGMIRQHQFDKVELVWITTPERSFEDLETLVSHAEEVLRRLELPYRVIQLCSGDLGFGAAKTYDLEVWLPSYNSYKEISSCSNDTDFQARRGNIRYRRKDGKISFVHTLNGSGVAVGRTLVAIIENYQRADGRIDVPKALQPYLGCEVLG.

233 to 235 lines the L-serine pocket; the sequence is TAE. 264–266 contributes to the ATP binding site; the sequence is RRE. Residue E287 participates in L-serine binding. 351–354 contacts ATP; the sequence is EISS. S386 contributes to the L-serine binding site.

It belongs to the class-II aminoacyl-tRNA synthetase family. Type-1 seryl-tRNA synthetase subfamily. As to quaternary structure, homodimer. The tRNA molecule binds across the dimer.

It localises to the cytoplasm. The catalysed reaction is tRNA(Ser) + L-serine + ATP = L-seryl-tRNA(Ser) + AMP + diphosphate + H(+). The enzyme catalyses tRNA(Sec) + L-serine + ATP = L-seryl-tRNA(Sec) + AMP + diphosphate + H(+). Its pathway is aminoacyl-tRNA biosynthesis; selenocysteinyl-tRNA(Sec) biosynthesis; L-seryl-tRNA(Sec) from L-serine and tRNA(Sec): step 1/1. In terms of biological role, catalyzes the attachment of serine to tRNA(Ser). Is also able to aminoacylate tRNA(Sec) with serine, to form the misacylated tRNA L-seryl-tRNA(Sec), which will be further converted into selenocysteinyl-tRNA(Sec). In Pseudothermotoga lettingae (strain ATCC BAA-301 / DSM 14385 / NBRC 107922 / TMO) (Thermotoga lettingae), this protein is Serine--tRNA ligase.